The sequence spans 157 residues: S-ribosylhomocysteine lyase 2 (157 aa).

Fe cation contacts are provided by His-54, His-58, and Cys-124.

The protein belongs to the LuxS family. In terms of assembly, homodimer. The cofactor is Fe cation.

It carries out the reaction S-(5-deoxy-D-ribos-5-yl)-L-homocysteine = (S)-4,5-dihydroxypentane-2,3-dione + L-homocysteine. Involved in the synthesis of autoinducer 2 (AI-2) which is secreted by bacteria and is used to communicate both the cell density and the metabolic potential of the environment. The regulation of gene expression in response to changes in cell density is called quorum sensing. Catalyzes the transformation of S-ribosylhomocysteine (RHC) to homocysteine (HC) and 4,5-dihydroxy-2,3-pentadione (DPD). The chain is S-ribosylhomocysteine lyase 2 from Lactobacillus delbrueckii subsp. bulgaricus (strain ATCC BAA-365 / Lb-18).